A 947-amino-acid chain; its full sequence is Microtubule cross-linking factor 3 (947 aa).

The first 21 residues, 1 to 21 (MSQPPIGGAAPATAAASPAAA), serve as a signal peptide directing secretion. 3 disordered regions span residues 1–251 (MSQP…SYWK), 266–368 (KERA…TLKN), and 496–524 (LSLK…DNED). 3 stretches are compositionally biased toward low complexity: residues 9–24 (AAPA…AATE), 72–81 (QQQLQQQQQQ), and 109–137 (APKG…ALGG). A compositionally biased stretch (basic and acidic residues) spans 141 to 151 (GPPEEPPRELE). Over residues 164-180 (GEGGGGGGEGGGAGGGS) the composition is skewed to gly residues. The segment covering 214–236 (ASPSPSSSSAGKTPGTGSRNSGS) has biased composition (low complexity). Positions 237–248 (GVAGGGSGGGGS) are enriched in gly residues. Low complexity-rich tracts occupy residues 287–297 (SSRSSPVSGPP) and 304–325 (AVAS…AEGS). Residues 342 to 726 (HPQQLQEQEE…GKVMQLQYEN (385 aa)) adopt a coiled-coil conformation. 2 stretches are compositionally biased toward basic and acidic residues: residues 355 to 368 (EMEK…TLKN) and 496 to 513 (LSLK…EKKA). Residue serine 569 is modified to Phosphoserine. The interval 743–786 (GIRGSPRDSDAESDAGKKESDDDSRPPHRKREGPIGGESDSEEV) is disordered. The span at 747-768 (SPRDSDAESDAGKKESDDDSRP) shows a compositional bias: basic and acidic residues. Serine 781 bears the Phosphoserine mark. A coiled-coil region spans residues 811 to 835 (DRQQMKDIRSEAERLGKTIDRLIAD). A helical membrane pass occupies residues 915–935 (PIILLILILVLFSSLSYTTIF).

Belongs to the MTCL family.

The protein localises to the membrane. The polypeptide is Microtubule cross-linking factor 3 (Homo sapiens (Human)).